A 608-amino-acid chain; its full sequence is Glutamine--fructose-6-phosphate aminotransferase [isomerizing] (608 aa).

The active-site Nucleophile; for GATase activity is C2. Residues 2–217 (CGIVGIVGTQ…DGDCAIVTRD (216 aa)) form the Glutamine amidotransferase type-2 domain. SIS domains follow at residues 281-422 (ADKA…ARGT) and 456-598 (LSRD…VDQP). K603 (for Fru-6P isomerization activity) is an active-site residue.

Homodimer.

The protein resides in the cytoplasm. It carries out the reaction D-fructose 6-phosphate + L-glutamine = D-glucosamine 6-phosphate + L-glutamate. Catalyzes the first step in hexosamine metabolism, converting fructose-6P into glucosamine-6P using glutamine as a nitrogen source. The sequence is that of Glutamine--fructose-6-phosphate aminotransferase [isomerizing] from Agrobacterium fabrum (strain C58 / ATCC 33970) (Agrobacterium tumefaciens (strain C58)).